Reading from the N-terminus, the 470-residue chain is UDP-N-acetylmuramoylalanine--D-glutamate ligase (470 aa).

Glycine 120–threonine 126 lines the ATP pocket.

It belongs to the MurCDEF family.

The protein localises to the cytoplasm. It catalyses the reaction UDP-N-acetyl-alpha-D-muramoyl-L-alanine + D-glutamate + ATP = UDP-N-acetyl-alpha-D-muramoyl-L-alanyl-D-glutamate + ADP + phosphate + H(+). It participates in cell wall biogenesis; peptidoglycan biosynthesis. In terms of biological role, cell wall formation. Catalyzes the addition of glutamate to the nucleotide precursor UDP-N-acetylmuramoyl-L-alanine (UMA). The polypeptide is UDP-N-acetylmuramoylalanine--D-glutamate ligase (Nitrosomonas eutropha (strain DSM 101675 / C91 / Nm57)).